A 153-amino-acid polypeptide reads, in one-letter code: UPF0178 protein Sfum_1097 (153 aa).

Belongs to the UPF0178 family.

In Syntrophobacter fumaroxidans (strain DSM 10017 / MPOB), this protein is UPF0178 protein Sfum_1097.